A 502-amino-acid polypeptide reads, in one-letter code: MEHSIFPRSLWTNDSKILHHHVADFFSSVQVTQDIPAGTSFGPCVLHNTFYDTIAFIALKSFDKRNKSYVFRVDPEAMKGSPLVVPWLRLVQAAMSEEDQNTEAYLKGGQLHFRTIRDVKEGEELLVWYDEELSHLLGFRDIKAKALTDGYTCTRCGQAFKNENPFLAHCRFLCTQEKVDIIRPINQQKPEVKRHRKVIDFHNIARDLEDKMNTSSFEDTTILRKRKQEPFLTPKSKKTVLLEKTNITNESNTTNANKDCRAFRDLSEPTDNAQTNESKISKNSAFTEVRKAPEPSNPEKSSRDIMAPEVGLQSNCSAFSFVVPKSARSEQKSAFCEPSKRALAEAQNPSPPDTDNSLDSFKSKSSLGYRNVLASHLFPTDLAGSHSGGGMSAPLTSGGSYYYAPEHWTRAIGGQLQSTSSLTLLPPTFTPLGVSVQNWCAKCNLSFRMTSDLVFHMRSHHKKEFAAEAQVRRRREEKLTCPICHEYFRERHHLSRHMTSHN.

One can recognise an SET domain in the interval R8–D130. Residue Y129 coordinates S-adenosyl-L-methionine. Residues Y151–C174 form a C2H2-type 1; atypical zinc finger. Disordered stretches follow at residues S267–R303 and P338–F361. Residues P269–F286 show a composition bias toward polar residues. 2 C2H2-type zinc fingers span residues N438 to H460 and L479 to H501.

Belongs to the krueppel C2H2-type zinc-finger protein family. In terms of tissue distribution, expressed in pMN progenitors and oligodendrocyte lineage cells in the embryo with expression declining in oligodendrocytes undergoing differentiation.

It is found in the nucleus. Its function is as follows. Transcriptional repressor. May have histone methyltransferase activity. Negatively regulates shh signaling activity in pMN progenitor cells which prevents their switch from motor neuron to oligodendrocyte precursor cell production. Independently of shh activity, also regulates oligodendrocyte formation. This Danio rerio (Zebrafish) protein is Zinc finger protein 488.